We begin with the raw amino-acid sequence, 78 residues long: U5-ctenitoxin-Pk1a (78 aa).

7 disulfides stabilise this stretch: Cys6–Cys23, Cys13–Cys29, Cys20–Cys52, Cys22–Cys40, Cys31–Cys38, Cys58–Cys73, and Cys69–Cys77.

Expressed by the venom gland.

The protein localises to the secreted. In terms of biological role, lethal neurotoxin. Causes spastic paralysis and death in mice in 4-6 minutes after intracerebroventricular injection at dose levels of 1.5 ug per mouse. This chain is U5-ctenitoxin-Pk1a, found in Phoneutria keyserlingi (Brazilian wandering spider).